A 242-amino-acid polypeptide reads, in one-letter code: Ditrans,polycis-undecaprenyl-diphosphate synthase ((2E,6E)-farnesyl-diphosphate specific) (242 aa).

Aspartate 21 is a catalytic residue. Residue aspartate 21 coordinates Mg(2+). Residues glycine 22–arginine 25, tryptophan 26, arginine 34, histidine 38, and serine 66–glutamate 68 contribute to the substrate site. The active-site Proton acceptor is the asparagine 69. Residues tryptophan 70, arginine 72, arginine 189, and arginine 195–serine 197 each bind substrate. Residue glutamate 208 participates in Mg(2+) binding.

The protein belongs to the UPP synthase family. In terms of assembly, homodimer. The cofactor is Mg(2+).

The catalysed reaction is 8 isopentenyl diphosphate + (2E,6E)-farnesyl diphosphate = di-trans,octa-cis-undecaprenyl diphosphate + 8 diphosphate. In terms of biological role, catalyzes the sequential condensation of isopentenyl diphosphate (IPP) with (2E,6E)-farnesyl diphosphate (E,E-FPP) to yield (2Z,6Z,10Z,14Z,18Z,22Z,26Z,30Z,34E,38E)-undecaprenyl diphosphate (di-trans,octa-cis-UPP). UPP is the precursor of glycosyl carrier lipid in the biosynthesis of bacterial cell wall polysaccharide components such as peptidoglycan and lipopolysaccharide. The chain is Ditrans,polycis-undecaprenyl-diphosphate synthase ((2E,6E)-farnesyl-diphosphate specific) from Haemophilus ducreyi (strain 35000HP / ATCC 700724).